A 601-amino-acid polypeptide reads, in one-letter code: Transcription factor Ken (601 aa).

The 69-residue stretch at 33 to 101 folds into the BTB domain; that stretch reads ADLTIVCENK…LYSGQTCITS (69 aa). Disordered stretches follow at residues 188–276, 331–365, and 471–491; these read AAEC…TINP, LSDGSDINSSPENYVVTPHRKRRPGFHNTQSDNQP, and DHPEGRSGSASGSGANLAGSN. 2 stretches are compositionally biased toward basic and acidic residues: residues 190–200 and 207–216; these read ECERSGGHNNK and CTHKDNKSDK. Positions 223–234 are enriched in polar residues; sequence NLSNAPPSGTSG. Over residues 235–247 the composition is skewed to low complexity; it reads SNSNISTSSNHQQ. Residues 248–258 show a composition bias toward basic residues; that stretch reads QQHHHHHHHNH. A compositionally biased stretch (low complexity) spans 259 to 275; that stretch reads NNNNNNNNNNSSSSTIN. Positions 476 to 490 are enriched in low complexity; it reads RSGSASGSGANLAGS. 3 consecutive C2H2-type zinc fingers follow at residues 500 to 522, 528 to 551, and 567 to 590; these read YRCEYCGKQFGMSWNLKTHLRVH, FACRLCVAMFKQKAHLLKHLCSVH, and YSCCFCSMCFESVQELVRHLSGHH.

As to expression, expressed from stage 5 in two rather faint stripes at positions of 64% (anterior domain; AD) and 17% (posterior domain; PD) egg length. During early gastrulation, at stage 6, these two stripes become more evident and detectable at the region posterior to the cephalic furrow and in the hindgut primordium. The AD disappears as gastrulation proceeds, while the PD remains. At stage 15, the AD appears again in the foregut, and PD expression in the hindgut and anal pad. In imaginal disks, it is ubiquitously expressed in both males and females in genital and eye-antennal disks. Not expressed in the brain. In genital disks, it is expressed along the margin of the anterior bulbus in males, while in females it is expressed in the posterior compartment along the anterior-posterior border, with medial expansion in the most posterior region.

It localises to the nucleus. Functionally, transcription factor required for terminalia development. Negative regulator of the JAK/STAT pathway: represses JAK/STAT-dependent expression of ventral veins lacking (vvl) in the posterior spiracles. The sequence is that of Transcription factor Ken (ken) from Drosophila melanogaster (Fruit fly).